The following is a 121-amino-acid chain: UPF0344 protein BCG9842_B4136 (121 aa).

The next 4 membrane-spanning stretches (helical) occupy residues 6-26, 38-58, 65-85, and 92-112; these read ITAW…YSAG, LMYI…VKTA, WYGL…MVLV, and PTGA…YLGL.

Belongs to the UPF0344 family.

It localises to the cell membrane. The protein is UPF0344 protein BCG9842_B4136 of Bacillus cereus (strain G9842).